The primary structure comprises 113 residues: uncharacterized protein (113 aa).

Transmembrane regions (helical) follow at residues 9–31 (IFPS…SVIY), 36–58 (VLTI…YKFQ), and 71–90 (IMAL…VVAV).

It localises to the cell membrane. This is an uncharacterized protein from Archaeoglobus fulgidus (strain ATCC 49558 / DSM 4304 / JCM 9628 / NBRC 100126 / VC-16).